Here is a 436-residue protein sequence, read N- to C-terminus: Enolase (436 aa).

Residues H159 and E168 each coordinate substrate. Residue E211 is the Proton donor of the active site. Residues D246, E295, and D320 each coordinate Mg(2+). 2 residues coordinate substrate: E295 and D320. Catalysis depends on K345, which acts as the Proton acceptor. Substrate-binding positions include 372–375 and K396; that span reads SHRS.

The protein belongs to the enolase family. As to quaternary structure, homodimer. The cofactor is Mg(2+).

It is found in the cytoplasm. The catalysed reaction is (2R)-2-phosphoglycerate = phosphoenolpyruvate + H2O. It functions in the pathway carbohydrate degradation; glycolysis; pyruvate from D-glyceraldehyde 3-phosphate: step 4/5. The sequence is that of Enolase from Cunninghamella elegans.